The chain runs to 210 residues: dTTP/UTP pyrophosphatase (210 aa).

Catalysis depends on aspartate 89, which acts as the Proton acceptor.

Belongs to the Maf family. YhdE subfamily. The cofactor is a divalent metal cation.

Its subcellular location is the cytoplasm. It carries out the reaction dTTP + H2O = dTMP + diphosphate + H(+). It catalyses the reaction UTP + H2O = UMP + diphosphate + H(+). In terms of biological role, nucleoside triphosphate pyrophosphatase that hydrolyzes dTTP and UTP. May have a dual role in cell division arrest and in preventing the incorporation of modified nucleotides into cellular nucleic acids. The chain is dTTP/UTP pyrophosphatase from Burkholderia lata (strain ATCC 17760 / DSM 23089 / LMG 22485 / NCIMB 9086 / R18194 / 383).